The primary structure comprises 589 residues: Leucine-rich repeat and immunoglobulin-like domain-containing nogo receptor-interacting protein 3 (589 aa).

Positions 1–23 (MTCWLHMLGLHLLLLPTAPLAAG) are cleaved as a signal peptide. In terms of domain architecture, LRRNT spans 24 to 53 (CPARCECSASTRTVACGRRRLTAIPEGIPA). Over 24 to 528 (CPARCECSAS…LDLTTILVST (505 aa)) the chain is Extracellular. 11 LRR repeats span residues 54–75 (ETRM…DLAS), 78–99 (TLEE…AFAN), 102–123 (RLRV…VFTH), 126–147 (SLTL…SFQD), 150–171 (SLQR…AFAG), 174–195 (GLAE…SLGH), 206–227 (HLAI…SHLE), 246–267 (NLTS…ALRQ), 270–291 (HLTC…SFRD), 294–315 (RLRE…AFVG), and 318–339 (QIRL…TFHS). N-linked (GlcNAc...) asparagine glycosylation is present at Asn184. Residues Asn246, Asn256, and Asn275 are each glycosylated (N-linked (GlcNAc...) asparagine). N-linked (GlcNAc...) asparagine glycosylation is present at Asn323. Positions 351-405 (NPLACDCRLLWIVQRRKTLNFDGRLPACATPAEVRGDALHNLPDSVLFEYFVCRK) constitute an LRRCT domain. In terms of domain architecture, Ig-like C2-type spans 406 to 495 (PKIRERRLQH…GNDTYFATLT (90 aa)). Cys428 and Cys479 are oxidised to a cystine. 3 N-linked (GlcNAc...) asparagine glycosylation sites follow: Asn487, Asn501, and Asn509. A helical membrane pass occupies residues 529–549 (AMGCITFLGVVLFCFLLLFVW). The Cytoplasmic segment spans residues 550-589 (SRGRGQHKNNFSVEYSFRKVDGPAAAAGQGGARKFNMKMI).

It is found in the membrane. This Mus musculus (Mouse) protein is Leucine-rich repeat and immunoglobulin-like domain-containing nogo receptor-interacting protein 3 (Lingo3).